Reading from the N-terminus, the 354-residue chain is Probable L-ascorbate-6-phosphate lactonase UlaG (354 aa).

This sequence belongs to the UlaG family. The cofactor is a divalent metal cation.

The protein localises to the cytoplasm. It carries out the reaction L-ascorbate 6-phosphate + H2O = 3-dehydro-L-gulonate 6-phosphate. The protein operates within cofactor degradation; L-ascorbate degradation; D-xylulose 5-phosphate from L-ascorbate: step 1/4. Probably catalyzes the hydrolysis of L-ascorbate-6-P into 3-keto-L-gulonate-6-P. Is essential for L-ascorbate utilization under anaerobic conditions. The protein is Probable L-ascorbate-6-phosphate lactonase UlaG of Salmonella choleraesuis (strain SC-B67).